Here is a 587-residue protein sequence, read N- to C-terminus: Pyruvate decarboxylase 3 (587 aa).

2 residues coordinate substrate: Asp48 and His135. Residues 415-496 are thiamine pyrophosphate binding; the sequence is DSWFNCQKLR…FLINNGGYTI (82 aa). Asp464, Asn491, and Gly493 together coordinate Mg(2+). Glu497 is a binding site for substrate.

The protein belongs to the TPP enzyme family. As to quaternary structure, homotetramer. The cofactor is a metal cation. Thiamine diphosphate serves as cofactor.

It catalyses the reaction a 2-oxocarboxylate + H(+) = an aldehyde + CO2. This Oryza sativa subsp. japonica (Rice) protein is Pyruvate decarboxylase 3 (PDC3).